The primary structure comprises 158 residues: Large ribosomal subunit protein uL30 (158 aa).

It belongs to the universal ribosomal protein uL30 family. Part of the 50S ribosomal subunit.

The polypeptide is Large ribosomal subunit protein uL30 (Saccharolobus islandicus (strain Y.G.57.14 / Yellowstone #1) (Sulfolobus islandicus)).